Consider the following 347-residue polypeptide: Anthranilate phosphoribosyltransferase (347 aa).

5-phospho-alpha-D-ribose 1-diphosphate is bound by residues Gly-88, 91–92 (GD), Thr-96, 98–101 (NIST), 116–124 (KHGGRSVSS), and Ser-128. Gly-88 is an anthranilate binding site. Ser-100 serves as a coordination point for Mg(2+). Anthranilate is bound at residue Arg-174. 2 residues coordinate Mg(2+): Asp-233 and Glu-234.

Belongs to the anthranilate phosphoribosyltransferase family. In terms of assembly, homodimer. Mg(2+) is required as a cofactor.

The catalysed reaction is N-(5-phospho-beta-D-ribosyl)anthranilate + diphosphate = 5-phospho-alpha-D-ribose 1-diphosphate + anthranilate. It functions in the pathway amino-acid biosynthesis; L-tryptophan biosynthesis; L-tryptophan from chorismate: step 2/5. In terms of biological role, catalyzes the transfer of the phosphoribosyl group of 5-phosphorylribose-1-pyrophosphate (PRPP) to anthranilate to yield N-(5'-phosphoribosyl)-anthranilate (PRA). The protein is Anthranilate phosphoribosyltransferase of Polaromonas sp. (strain JS666 / ATCC BAA-500).